Reading from the N-terminus, the 129-residue chain is Lysozyme C (129 aa).

The 129-residue stretch at 1–129 (KVFGRCELAA…VHAWIRGCRL (129 aa)) folds into the C-type lysozyme domain. 4 disulfides stabilise this stretch: Cys-6–Cys-127, Cys-30–Cys-115, Cys-64–Cys-80, and Cys-76–Cys-94. Active-site residues include Glu-35 and Asp-52.

Belongs to the glycosyl hydrolase 22 family. As to quaternary structure, monomer.

It localises to the secreted. The catalysed reaction is Hydrolysis of (1-&gt;4)-beta-linkages between N-acetylmuramic acid and N-acetyl-D-glucosamine residues in a peptidoglycan and between N-acetyl-D-glucosamine residues in chitodextrins.. Functionally, lysozymes have primarily a bacteriolytic function; those in tissues and body fluids are associated with the monocyte-macrophage system and enhance the activity of immunoagents. The chain is Lysozyme C (LYZ) from Callipepla californica (California quail).